Reading from the N-terminus, the 355-residue chain is Homeobox protein knotted-1-like 12 (355 aa).

Disordered stretches follow at residues 52-82 (AAGPSQYHGHGHPHHGGGHHHSKHGGAGGGE) and 207-233 (ECVGSSEDDMDPSGRENEPPEIDPRAE). Basic residues predominate over residues 60–75 (GHGHPHHGGGHHHSKH). A compositionally biased stretch (basic and acidic residues) spans 218–233 (PSGRENEPPEIDPRAE). Residues 236 to 256 (ELKFQLLKKYSGYLSSLRQEF) form the ELK domain. Positions 257–320 (SKKKKKGKLP…NQRKRHWKPS (64 aa)) form a DNA-binding region, homeobox; TALE-type.

This sequence belongs to the TALE/KNOX homeobox family. As to expression, expressed in stems, rachis and inflorescence.

The protein resides in the nucleus. Its function is as follows. Probable transcription factor that may be involved in shoot formation during embryogenesis. This is Homeobox protein knotted-1-like 12 (OSH15) from Oryza sativa subsp. japonica (Rice).